The primary structure comprises 284 residues: L-ribulose-5-phosphate 3-epimerase UlaE (284 aa).

The protein belongs to the L-ribulose-5-phosphate 3-epimerase family.

The catalysed reaction is L-ribulose 5-phosphate = L-xylulose 5-phosphate. The protein operates within cofactor degradation; L-ascorbate degradation; D-xylulose 5-phosphate from L-ascorbate: step 3/4. In terms of biological role, catalyzes the isomerization of L-xylulose-5-phosphate to L-ribulose-5-phosphate. Is involved in the anaerobic L-ascorbate utilization. This Escherichia coli O127:H6 (strain E2348/69 / EPEC) protein is L-ribulose-5-phosphate 3-epimerase UlaE.